A 454-amino-acid polypeptide reads, in one-letter code: Tryptophanase (454 aa).

Lys256 is modified (N6-(pyridoxal phosphate)lysine).

It belongs to the beta-eliminating lyase family. Homotetramer. It depends on pyridoxal 5'-phosphate as a cofactor.

It carries out the reaction L-tryptophan + H2O = indole + pyruvate + NH4(+). The protein operates within amino-acid degradation; L-tryptophan degradation via pyruvate pathway; indole and pyruvate from L-tryptophan: step 1/1. The polypeptide is Tryptophanase (Hyphomonas neptunium (strain ATCC 15444)).